Here is a 347-residue protein sequence, read N- to C-terminus: Large ribosomal subunit protein uL3 (347 aa).

The tract at residues 325–347 (RPPKKKPPVERPQITYISRESKQ) is disordered.

The protein belongs to the universal ribosomal protein uL3 family. In terms of assembly, part of the 50S ribosomal subunit. Forms a cluster with proteins L14 and L24e.

Its function is as follows. One of the primary rRNA binding proteins, it binds directly near the 3'-end of the 23S rRNA, where it nucleates assembly of the 50S subunit. This chain is Large ribosomal subunit protein uL3, found in Thermococcus onnurineus (strain NA1).